The primary structure comprises 189 residues: Elongation factor P (189 aa).

The protein belongs to the elongation factor P family.

The protein localises to the cytoplasm. The protein operates within protein biosynthesis; polypeptide chain elongation. In terms of biological role, involved in peptide bond synthesis. Stimulates efficient translation and peptide-bond synthesis on native or reconstituted 70S ribosomes in vitro. Probably functions indirectly by altering the affinity of the ribosome for aminoacyl-tRNA, thus increasing their reactivity as acceptors for peptidyl transferase. This is Elongation factor P from Rhizobium rhizogenes (strain K84 / ATCC BAA-868) (Agrobacterium radiobacter).